A 597-amino-acid polypeptide reads, in one-letter code: Elongation factor 4 (597 aa).

The tr-type G domain maps to 2–184; sequence DHIRNFSIIA…ALVAKVPPPK (183 aa). GTP is bound by residues 14 to 19 and 131 to 134; these read DHGKST and NKID.

This sequence belongs to the TRAFAC class translation factor GTPase superfamily. Classic translation factor GTPase family. LepA subfamily.

The protein resides in the cell inner membrane. It carries out the reaction GTP + H2O = GDP + phosphate + H(+). Its function is as follows. Required for accurate and efficient protein synthesis under certain stress conditions. May act as a fidelity factor of the translation reaction, by catalyzing a one-codon backward translocation of tRNAs on improperly translocated ribosomes. Back-translocation proceeds from a post-translocation (POST) complex to a pre-translocation (PRE) complex, thus giving elongation factor G a second chance to translocate the tRNAs correctly. Binds to ribosomes in a GTP-dependent manner. This is Elongation factor 4 from Paraburkholderia phytofirmans (strain DSM 17436 / LMG 22146 / PsJN) (Burkholderia phytofirmans).